The sequence spans 257 residues: Phosphonates import ATP-binding protein PhnC (257 aa).

Positions 4 to 248 constitute an ABC transporter domain; the sequence is IEFKDVSKVY…VFNHIYGRSI (245 aa).

Belongs to the ABC transporter superfamily. Phosphonates importer (TC 3.A.1.9.1) family. In terms of assembly, the complex is composed of two ATP-binding proteins (PhnC), two transmembrane proteins (PhnE) and a solute-binding protein (PhnD).

The protein resides in the cell membrane. The catalysed reaction is phosphonate(out) + ATP + H2O = phosphonate(in) + ADP + phosphate + H(+). Functionally, part of the ABC transporter complex PhnCDE involved in phosphonates import. Responsible for energy coupling to the transport system. The protein is Phosphonates import ATP-binding protein PhnC of Staphylococcus epidermidis (strain ATCC 35984 / DSM 28319 / BCRC 17069 / CCUG 31568 / BM 3577 / RP62A).